The chain runs to 88 residues: Small ribosomal subunit protein uS15 (88 aa).

It belongs to the universal ribosomal protein uS15 family. As to quaternary structure, part of the 30S ribosomal subunit. Forms a bridge to the 50S subunit in the 70S ribosome, contacting the 23S rRNA.

Functionally, one of the primary rRNA binding proteins, it binds directly to 16S rRNA where it helps nucleate assembly of the platform of the 30S subunit by binding and bridging several RNA helices of the 16S rRNA. In terms of biological role, forms an intersubunit bridge (bridge B4) with the 23S rRNA of the 50S subunit in the ribosome. This Geobacter sulfurreducens (strain ATCC 51573 / DSM 12127 / PCA) protein is Small ribosomal subunit protein uS15.